The primary structure comprises 44 residues: Large ribosomal subunit protein bL34 (44 aa).

This sequence belongs to the bacterial ribosomal protein bL34 family.

The polypeptide is Large ribosomal subunit protein bL34 (Variovorax paradoxus (strain S110)).